A 443-amino-acid chain; its full sequence is Tubulin beta chain (443 aa).

GTP contacts are provided by glutamine 11, glutamate 69, serine 138, glycine 142, threonine 143, glycine 144, asparagine 204, and asparagine 226. Glutamate 69 serves as a coordination point for Mg(2+). The tract at residues 421 to 443 (EYQQYQDASAEEEGEFGEEEEEN) is disordered. Over residues 429 to 443 (SAEEEGEFGEEEEEN) the composition is skewed to acidic residues.

It belongs to the tubulin family. In terms of assembly, dimer of alpha and beta chains. A typical microtubule is a hollow water-filled tube with an outer diameter of 25 nm and an inner diameter of 15 nM. Alpha-beta heterodimers associate head-to-tail to form protofilaments running lengthwise along the microtubule wall with the beta-tubulin subunit facing the microtubule plus end conferring a structural polarity. Microtubules usually have 13 protofilaments but different protofilament numbers can be found in some organisms and specialized cells. Mg(2+) serves as cofactor.

It is found in the cytoplasm. It localises to the cytoskeleton. Tubulin is the major constituent of microtubules, a cylinder consisting of laterally associated linear protofilaments composed of alpha- and beta-tubulin heterodimers. Microtubules grow by the addition of GTP-tubulin dimers to the microtubule end, where a stabilizing cap forms. Below the cap, tubulin dimers are in GDP-bound state, owing to GTPase activity of alpha-tubulin. The chain is Tubulin beta chain (TUBB1) from Polytomella agilis (Quadriflagellate alga).